Consider the following 73-residue polypeptide: Large ribosomal subunit protein bL31 (73 aa).

It belongs to the bacterial ribosomal protein bL31 family. Type A subfamily. In terms of assembly, part of the 50S ribosomal subunit.

In terms of biological role, binds the 23S rRNA. This Ruegeria sp. (strain TM1040) (Silicibacter sp.) protein is Large ribosomal subunit protein bL31.